The following is a 219-amino-acid chain: Mediator of RNA polymerase II transcription subunit 20 (219 aa).

It belongs to the Mediator complex subunit 20 family. In terms of assembly, component of the Mediator complex.

The protein localises to the nucleus. In terms of biological role, component of the Mediator complex, a coactivator involved in the regulated transcription of nearly all RNA polymerase II-dependent genes. Mediator functions as a bridge to convey information from gene-specific regulatory proteins to the basal RNA polymerase II transcription machinery. Mediator is recruited to promoters by direct interactions with regulatory proteins and serves as a scaffold for the assembly of a functional preinitiation complex with RNA polymerase II and the general transcription factors. This chain is Mediator of RNA polymerase II transcription subunit 20 (MED20), found in Aedes aegypti (Yellowfever mosquito).